Consider the following 685-residue polypeptide: E3 ubiquitin-protein ligase RNF103 (685 aa).

The next 4 membrane-spanning stretches (helical) occupy residues 6–26, 326–346, 366–386, and 411–431; these read FFLLLYFLVLFVLARFFEAIV, LFVLSLVLVNLMAWMDLFITQ, LLIISWLPVLGFLQLPYLDSF, and MFYSSHPALFLSTYLGHGLLI. Acidic residues predominate over residues 526–543; the sequence is EEMSEGSQDTENDSESEN. A disordered region spans residues 526–550; that stretch reads EEMSEGSQDTENDSESENTDTLSSE. The RING-type zinc-finger motif lies at 621–663; that stretch reads CVVCLENFENGCLLMGLPCGHVFHQNCIVMWLAGGRHCCPVCR.

Interacts with DERL1 and VCP. In terms of tissue distribution, highly expressed in the normal cerebellum but not in the cerebral cortex.

It is found in the endoplasmic reticulum membrane. The enzyme catalyses S-ubiquitinyl-[E2 ubiquitin-conjugating enzyme]-L-cysteine + [acceptor protein]-L-lysine = [E2 ubiquitin-conjugating enzyme]-L-cysteine + N(6)-ubiquitinyl-[acceptor protein]-L-lysine.. It participates in protein modification; protein ubiquitination. Its function is as follows. Acts as an E2-dependent E3 ubiquitin-protein ligase, probably involved in the ER-associated protein degradation pathway. The sequence is that of E3 ubiquitin-protein ligase RNF103 (RNF103) from Homo sapiens (Human).